The chain runs to 243 residues: Ion-translocating oxidoreductase complex subunit E (243 aa).

6 consecutive transmembrane segments (helical) span residues leucine 40–leucine 60, alanine 72–leucine 92, aspartate 94–glycine 114, alanine 129–isoleucine 149, isoleucine 152–phenylalanine 172, and glycine 183–leucine 203.

This sequence belongs to the NqrDE/RnfAE family. In terms of assembly, the complex is composed of six subunits: RnfA, RnfB, RnfC, RnfD, RnfE and RnfG.

It localises to the cellular chromatophore membrane. In terms of biological role, part of a membrane-bound complex that couples electron transfer with translocation of ions across the membrane. Required for nitrogen fixation. Involved in electron transfer to nitrogenase. The sequence is that of Ion-translocating oxidoreductase complex subunit E from Rhodobacter capsulatus (Rhodopseudomonas capsulata).